The following is a 691-amino-acid chain: Elongation factor G (691 aa).

The region spanning 8–283 (KKVRNIGIAA…AVVAYLPAPD (276 aa)) is the tr-type G domain. GTP-binding positions include 17–24 (AHIDAGKT), 81–85 (DTPGH), and 135–138 (NKMD).

It belongs to the TRAFAC class translation factor GTPase superfamily. Classic translation factor GTPase family. EF-G/EF-2 subfamily.

Its subcellular location is the cytoplasm. Its function is as follows. Catalyzes the GTP-dependent ribosomal translocation step during translation elongation. During this step, the ribosome changes from the pre-translocational (PRE) to the post-translocational (POST) state as the newly formed A-site-bound peptidyl-tRNA and P-site-bound deacylated tRNA move to the P and E sites, respectively. Catalyzes the coordinated movement of the two tRNA molecules, the mRNA and conformational changes in the ribosome. This chain is Elongation factor G, found in Campylobacter jejuni subsp. jejuni serotype O:23/36 (strain 81-176).